The following is a 400-amino-acid chain: Opsin-3 (400 aa).

The Extracellular segment spans residues 1 to 38 (MYSGNRSGDQGYWEDGAGAEGAAPAGTRSPAPLFSPTA). Asparagine 5 carries N-linked (GlcNAc...) asparagine glycosylation. The chain crosses the membrane as a helical span at residues 39–63 (YERLALLLGCLALLGVGGNLLVLLL). The Cytoplasmic segment spans residues 64–75 (YSKFPRLRTPTH). The chain crosses the membrane as a helical span at residues 76-100 (LFLVNLSLGDLLVSLFGVTFTFASC). Over 101-115 (LRNGWVWDAVGCAWD) the chain is Extracellular. A disulfide bridge connects residues cysteine 112 and cysteine 186. Residues 116–135 (GFSGSLFGFVSITTLTVLAY) traverse the membrane as a helical segment. The Cytoplasmic segment spans residues 136-151 (ERYIRVVHARVINFSW). The helical transmembrane segment at 152 to 175 (AWRAITYIWLYSLAWAGAPLLGWN) threads the bilayer. The Extracellular segment spans residues 176-199 (RYILDIHGLGCTVDWRSKDANDSS). Asparagine 196 carries an N-linked (GlcNAc...) asparagine glycan. A helical membrane pass occupies residues 200 to 227 (FVLFLFLGCLVVPVGIIAHCYGHILYSV). Over 228-253 (RMLRCVEDLQTIQVIKMLRYEKKVAK) the chain is Cytoplasmic. The helical transmembrane segment at 254–277 (MCFLMAFVFLTCWMPYIVTRFLVV) threads the bilayer. Over 278 to 285 (NGYGHLVT) the chain is Extracellular. Residues 286–310 (PTVSIVSYLFAKSSTVYNPVIYIFM) form a helical membrane-spanning segment. Lysine 297 bears the N6-(retinylidene)lysine mark. The Cytoplasmic segment spans residues 311-400 (NRKFRRSLLQ…KVDVIQVRPL (90 aa)). Cysteine 323 carries S-palmitoyl cysteine lipidation.

Belongs to the G-protein coupled receptor 1 family. Opsin subfamily. In terms of assembly, interacts with MC1R; the interaction results in a decrease in MC1R-mediated cAMP signaling and ultimately a decrease in melanin production in melanocytes. Expressed in the eye (at protein level). Expressed in tracheal airway smooth muscle. Expressed in brown adipocyte tissue; expression becomes more abundant during differentiation. Strongly expressed in brain. Highly expressed in the preoptic area and paraventricular nucleus of the hypothalamus. Shows highly patterned expression in other regions of the brain, being enriched in selected regions of the cerebral cortex, cerebellar Purkinje cells, a subset of striatal neurons, selected thalamic nuclei, and a subset of interneurons in the ventral horn of the spinal cord.

It is found in the cell membrane. The protein resides in the cytoplasm. Its function is as follows. G-protein coupled receptor which selectively activates G proteins via ultraviolet A (UVA) light-mediated activation in the skin. Binds both 11-cis retinal and all-trans retinal. Regulates melanogenesis in melanocytes via inhibition of alpha-MSH-induced MC1R-mediated cAMP signaling, modulation of calcium flux, regulation of CAMK2 phosphorylation, and subsequently phosphorylation of CREB, p38, ERK and MITF in response to blue light. Plays a role in melanocyte survival through regulation of intracellular calcium levels and subsequent BCL2/RAF1 signaling. Additionally regulates apoptosis via cytochrome c release and subsequent activation of the caspase cascade. Required for TYR and DCT blue light-induced complex formation in melanocytes. Involved in keratinocyte differentiation in response to blue-light. Required for the UVA-mediated induction of calcium and mitogen-activated protein kinase signaling resulting in the expression of MMP1, MMP2, MMP3, MMP9 and TIMP1 in dermal fibroblasts. Plays a role in light-mediated glucose uptake, mitochondrial respiration and fatty acid metabolism in brown adipocyte tissues. May be involved in photorelaxation of airway smooth muscle cells, via blue-light dependent GPCR signaling pathways. The sequence is that of Opsin-3 (Opn3) from Mus musculus (Mouse).